Here is a 391-residue protein sequence, read N- to C-terminus: NADH-quinone oxidoreductase subunit D (391 aa).

It belongs to the complex I 49 kDa subunit family. NDH-1 is composed of 14 different subunits. Subunits NuoB, C, D, E, F, and G constitute the peripheral sector of the complex.

It is found in the cell inner membrane. It carries out the reaction a quinone + NADH + 5 H(+)(in) = a quinol + NAD(+) + 4 H(+)(out). Its function is as follows. NDH-1 shuttles electrons from NADH, via FMN and iron-sulfur (Fe-S) centers, to quinones in the respiratory chain. The immediate electron acceptor for the enzyme in this species is believed to be ubiquinone. Couples the redox reaction to proton translocation (for every two electrons transferred, four hydrogen ions are translocated across the cytoplasmic membrane), and thus conserves the redox energy in a proton gradient. This is NADH-quinone oxidoreductase subunit D from Rickettsia canadensis (strain McKiel).